The sequence spans 329 residues: Probable acyltransferase FabY (329 aa).

One can recognise an N-acetyltransferase domain in the interval 18–162; it reads YHLRVPQTEE…RHFLMIKPVA (145 aa).

This sequence belongs to the acetyltransferase family. FabY subfamily.

Its pathway is lipid metabolism; fatty acid biosynthesis. In terms of biological role, supports initiation of fatty acid biosynthesis in the absence of FabH. The protein is Probable acyltransferase FabY of Escherichia coli O157:H7.